We begin with the raw amino-acid sequence, 131 residues long: Histone H2B.2 (131 aa).

Positions 1–19 are enriched in basic and acidic residues; the sequence is MSSAAEKKPASKAPAEKKP. Residues 1 to 37 form a disordered region; the sequence is MSSAAEKKPASKAPAEKKPAAKKTSTSVDGKKRSKVR. An N6-acetyllysine; alternate mark is found at Lys-7 and Lys-8. Glycyl lysine isopeptide (Lys-Gly) (interchain with G-Cter in SUMO); alternate cross-links involve residues Lys-7 and Lys-8. Ser-11 bears the Phosphoserine mark. Residue Lys-12 is modified to N6-acetyllysine. Residues Lys-17, Lys-18, Lys-22, and Lys-23 each carry the N6-acetyllysine; alternate modification. Glycyl lysine isopeptide (Lys-Gly) (interchain with G-Cter in SUMO); alternate cross-links involve residues Lys-17 and Lys-18. Position 22 is an N6-butyryllysine; alternate (Lys-22). Lys-23 is modified (N6-methyllysine; alternate). Lys-35 carries the N6-succinyllysine modification. N6,N6-dimethyllysine is present on Lys-38. At Lys-47 the chain carries N6-succinyllysine. Lys-124 participates in a covalent cross-link: Glycyl lysine isopeptide (Lys-Gly) (interchain with G-Cter in ubiquitin).

This sequence belongs to the histone H2B family. In terms of assembly, the nucleosome is a histone octamer containing two molecules each of H2A, H2B, H3 and H4 assembled in one H3-H4 heterotetramer and two H2A-H2B heterodimers. The octamer wraps approximately 147 bp of DNA. Interacts with NAP1. Monoubiquitinated by the RAD6/UBC2-BRE1 complex to form H2BK123ub1. H2BK123ub1 gives a specific tag for epigenetic transcriptional activation and is also prerequisite for H3K4me and H3K79me formation. H2BK123ub1 also modulates the formation of double-strand breaks during meiosis and is a prerequisite for DNA-damage checkpoint activation. Deubiquitination is performed by UBP8 in presence of SGF11. In terms of processing, phosphorylated by STE20 to form H2BS10ph during progression through meiotic prophase. May be correlated with chromosome condensation. H2BS10ph is also formed after H(2)O(2) treatment, and is a step leading to apoptosis. Post-translationally, acetylated by GCN5, a component of the SAGA complex, to form H2BK11ac and H2BK16ac. H2BK16ac can also be formed by ESA1, a component of the NuA4 histone acetyltransferase (HAT) complex. Acetylation of N-terminal lysines and particularly formation of H2BK11acK16ac has a positive effect on transcription. Sumoylation to form H2BK6su or H2BK7su, and probably also H2BK16su or H2BK17su, occurs preferentially near the telomeres and represses gene transcription.

The protein resides in the nucleus. It is found in the chromosome. Core component of nucleosome. Nucleosomes wrap and compact DNA into chromatin, limiting DNA accessibility to the cellular machineries which require DNA as a template. Histones thereby play a central role in transcription regulation, DNA repair, DNA replication and chromosomal stability. DNA accessibility is regulated via a complex set of post-translational modifications of histones, also called histone code, and nucleosome remodeling. This Saccharomyces cerevisiae (strain ATCC 204508 / S288c) (Baker's yeast) protein is Histone H2B.2 (HTB2).